A 269-amino-acid polypeptide reads, in one-letter code: Regulatory protein RecX (269 aa).

It belongs to the RecX family.

It localises to the cytoplasm. Functionally, modulates RecA activity. The polypeptide is Regulatory protein RecX (Lactococcus lactis subsp. cremoris (strain MG1363)).